We begin with the raw amino-acid sequence, 803 residues long: Phosphoribosylformylglycinamidine synthase subunit PurL (803 aa).

His65 is an active-site residue. The ATP site is built by Tyr68 and Lys107. Glu109 contributes to the Mg(2+) binding site. Residues 110–113 and Arg132 each bind substrate; that span reads SHNH. His111 (proton acceptor) is an active-site residue. Asp133 is a binding site for Mg(2+). A substrate-binding site is contributed by Gln256. Position 284 (Asp284) interacts with Mg(2+). 328–330 lines the substrate pocket; sequence ESQ. 2 residues coordinate ATP: Asn537 and Gly574. Asn575 serves as a coordination point for Mg(2+). Residue Ser577 coordinates substrate.

This sequence belongs to the FGAMS family. In terms of assembly, monomer. Part of the FGAM synthase complex composed of 1 PurL, 1 PurQ and 2 PurS subunits.

Its subcellular location is the cytoplasm. The catalysed reaction is N(2)-formyl-N(1)-(5-phospho-beta-D-ribosyl)glycinamide + L-glutamine + ATP + H2O = 2-formamido-N(1)-(5-O-phospho-beta-D-ribosyl)acetamidine + L-glutamate + ADP + phosphate + H(+). It functions in the pathway purine metabolism; IMP biosynthesis via de novo pathway; 5-amino-1-(5-phospho-D-ribosyl)imidazole from N(2)-formyl-N(1)-(5-phospho-D-ribosyl)glycinamide: step 1/2. Part of the phosphoribosylformylglycinamidine synthase complex involved in the purines biosynthetic pathway. Catalyzes the ATP-dependent conversion of formylglycinamide ribonucleotide (FGAR) and glutamine to yield formylglycinamidine ribonucleotide (FGAM) and glutamate. The FGAM synthase complex is composed of three subunits. PurQ produces an ammonia molecule by converting glutamine to glutamate. PurL transfers the ammonia molecule to FGAR to form FGAM in an ATP-dependent manner. PurS interacts with PurQ and PurL and is thought to assist in the transfer of the ammonia molecule from PurQ to PurL. This is Phosphoribosylformylglycinamidine synthase subunit PurL from Prochlorococcus marinus (strain NATL1A).